We begin with the raw amino-acid sequence, 556 residues long: Beta-hexosaminidase subunit beta (556 aa).

Residues 1-42 (MELCGLGLPRPPMLLALLLATLLAAMLALLTQVALVVQVAEA) form the signal peptide. A propeptide spanning residues 43-121 (ARAPSVSAKP…HHEPAEFQAK (79 aa)) is cleaved from the precursor. Asn-84 carries an N-linked (GlcNAc...) asparagine glycan. Cys-91 and Cys-137 are oxidised to a cystine. N-linked (GlcNAc...) asparagine glycans are attached at residues Asn-142, Asn-190, and Asn-327. 2 disulfides stabilise this stretch: Cys-309–Cys-360 and Cys-534–Cys-551. The active-site Proton donor is Glu-355.

This sequence belongs to the glycosyl hydrolase 20 family. As to quaternary structure, there are 3 forms of beta-hexosaminidase: hexosaminidase A is a heterodimer composed of one subunit alpha and one subunit beta (chain A and B); hexosaminidase B is a homodimer of two beta subunits (two chains A and B); hexosaminidase S is a homodimer of two alpha subunits. The composition of the dimer (isozyme A versus isozyme S) has a significant effect on the substrate specificity of the alpha subunit active site. N-linked glycans at Asn-142 and Asn-190 consist of Man(3)-GlcNAc(2) and Man(5 to 7)-GlcNAc(2), respectively. In terms of processing, the beta-A and beta-B chains are produced by proteolytic processing of the precursor beta chain.

It is found in the lysosome. Its subcellular location is the cytoplasmic vesicle. It localises to the secretory vesicle. The protein resides in the cortical granule. The enzyme catalyses Hydrolysis of terminal non-reducing N-acetyl-D-hexosamine residues in N-acetyl-beta-D-hexosaminides.. The catalysed reaction is N-acetyl-beta-D-galactosaminyl-(1-&gt;4)-beta-D-3-sulfogalactosyl-(1-&gt;4)-beta-D-glucosyl-(1&lt;-&gt;1')-ceramide + H2O = a beta-D-3-sulfogalactosyl-(1-&gt;4)-beta-D-glucosyl-(1&lt;-&gt;1')-ceramide + N-acetyl-beta-D-galactosamine. It catalyses the reaction a ganglioside GM2 (d18:1(4E)) + H2O = a ganglioside GM3 (d18:1(4E)) + N-acetyl-beta-D-galactosamine. It carries out the reaction a ganglioside GM2 + H2O = a ganglioside GM3 + N-acetyl-beta-D-galactosamine. The enzyme catalyses beta-D-GalNAc-(1-&gt;4)-alpha-L-IdoA-(1-&gt;3)-beta-D-GalNAc-4-sulfate-(1-&gt;4)-alpha-L-IdoA-(1-&gt;3)-D-GalNAc-4-sulfate + H2O = alpha-L-IdoA-(1-&gt;3)-beta-D-GalNAc-4-sulfate-(1-&gt;4)-alpha-L-IdoA-(1-&gt;3)-D-GalNAc-4-sulfate + N-acetyl-D-galactosamine. The catalysed reaction is N-acetyl-beta-D-6-sulfogalactosaminyl-(1-&gt;4)-alpha-L-iduronyl-(1-&gt;3)-N-acetyl-D-6-sulfogalactosamine + H2O = alpha-L-iduronyl-(1-&gt;3)-N-acetyl-D-6-sulfogalactosamine + N-acetyl-D-6-sulfogalactosamine. Its activity is regulated as follows. Addition of GM2A stimulates the hydrolysis of sulfated glycosphingolipid SM2 and the ganglioside GM2. Hydrolyzes the non-reducing end N-acetyl-D-hexosamine and/or sulfated N-acetyl-D-hexosamine of glycoconjugates, such as the oligosaccharide moieties from proteins and neutral glycolipids, or from certain mucopolysaccharides. The isozyme B does not hydrolyze each of these substrates, however hydrolyzes efficiently neutral oligosaccharide. Only the isozyme A is responsible for the degradation of GM2 gangliosides in the presence of GM2A. During fertilization is responsible, at least in part, for the zona block to polyspermy. Present in the cortical granules of non-activated oocytes, is exocytosed during the cortical reaction in response to oocyte activation and inactivates the sperm galactosyltransferase-binding site, accounting for the block in sperm binding to the zona pellucida. The chain is Beta-hexosaminidase subunit beta from Homo sapiens (Human).